The primary structure comprises 663 residues: Fructose-1,6-bisphosphatase class 3 1 (663 aa).

This sequence belongs to the FBPase class 3 family. Mn(2+) serves as cofactor.

The catalysed reaction is beta-D-fructose 1,6-bisphosphate + H2O = beta-D-fructose 6-phosphate + phosphate. It functions in the pathway carbohydrate biosynthesis; gluconeogenesis. This is Fructose-1,6-bisphosphatase class 3 1 from Clostridium beijerinckii (strain ATCC 51743 / NCIMB 8052) (Clostridium acetobutylicum).